We begin with the raw amino-acid sequence, 595 residues long: Isoprene synthase, chloroplastic (595 aa).

Residues 1–37 constitute a chloroplast transit peptide; it reads MATELLCLHRPISLTHKLFRNPLPKVIQATPLTLKLR. Asp-345 is a dimethylallyl diphosphate binding site. 2 residues coordinate Mg(2+): Asp-345 and Asp-349. The short motif at 345–349 is the DDXXD motif element; sequence DDIYD. Glu-423, Arg-486, and Asn-489 together coordinate dimethylallyl diphosphate. Mg(2+) contacts are provided by Asn-489, Ser-493, and Glu-497.

Belongs to the terpene synthase family. Tpsb subfamily. Mg(2+) serves as cofactor. Mn(2+) is required as a cofactor.

Its subcellular location is the plastid. It localises to the chloroplast. It catalyses the reaction dimethylallyl diphosphate = isoprene + diphosphate. Functionally, lyase that catalyzes the formation of isoprene from dimethylallyl diphosphate. The protein is Isoprene synthase, chloroplastic (ISPS) of Populus tremuloides (Quaking aspen).